The sequence spans 1235 residues: ATP-dependent DNA helicase mph1 (1235 aa).

2 disordered regions span residues 20–78 (LTQA…YRIH) and 96–148 (DEMP…VHSP). The span at 61-72 (SRSDNDEADEKK) shows a compositional bias: basic and acidic residues. Positions 137–148 (AKTQKQNIVHSP) are enriched in polar residues. In terms of domain architecture, Helicase ATP-binding spans 272-440 (IVHKGLFNNL…EVIDNLEIAE (169 aa)). 285 to 292 (LPTGLGKT) contributes to the ATP binding site. Positions 388–391 (DEAH) match the DEAH box motif. The region spanning 608-784 (KLTYLCDTVL…GSRFTFRHDL (177 aa)) is the Helicase C-terminal domain. Disordered stretches follow at residues 808 to 827 (NTQD…RKKL), 944 to 1117 (SRLQ…PPLM), and 1144 to 1235 (TGAK…DSDE). Residues 947–958 (QRPEDRDNKPYG) show a composition bias toward basic and acidic residues. The span at 1015-1027 (VAPKKAKPRRGRA) shows a compositional bias: basic residues. Basic and acidic residues predominate over residues 1065 to 1074 (PGERVDRTSD). Residues 1075–1085 (MEELEADDDSD) show a composition bias toward acidic residues. Composition is skewed to polar residues over residues 1095 to 1114 (PTQT…SSSP) and 1146 to 1159 (AKNS…MTQE). Over residues 1160-1170 (SSDGGDSMDSD) the composition is skewed to low complexity. Positions 1194 to 1209 (PSSSVFSSGQKATPNM) are enriched in polar residues.

This sequence belongs to the DEAD box helicase family. DEAH subfamily. FANCM sub-subfamily. Interacts with the MHF histone-fold complex to form the FANCM-MHF complex.

It localises to the nucleus. The catalysed reaction is ATP + H2O = ADP + phosphate + H(+). Its function is as follows. ATP-dependent DNA helicase involved in DNA damage repair by homologous recombination and in genome maintenance. Capable of unwinding D-loops. Plays a role in limiting crossover recombinants during mitotic DNA double-strand break (DSB) repair. Component of a FANCM-MHF complex which promotes gene conversion at blocked replication forks, probably by reversal of the stalled fork. The sequence is that of ATP-dependent DNA helicase mph1 from Sclerotinia sclerotiorum (strain ATCC 18683 / 1980 / Ss-1) (White mold).